A 393-amino-acid polypeptide reads, in one-letter code: Cysteine protease ATG4B (393 aa).

The active-site Nucleophile is C73. Residues D278 and H280 contribute to the active site. Residues 388-391 (FEIL) carry the LIR motif.

The protein belongs to the peptidase C54 family.

Its subcellular location is the cytoplasm. It localises to the cytosol. The protein resides in the cytoplasmic vesicle. The protein localises to the autophagosome. It is found in the endoplasmic reticulum. Its subcellular location is the mitochondrion. The enzyme catalyses [protein]-C-terminal L-amino acid-glycyl-phosphatidylethanolamide + H2O = [protein]-C-terminal L-amino acid-glycine + a 1,2-diacyl-sn-glycero-3-phosphoethanolamine. It catalyses the reaction [protein]-C-terminal L-amino acid-glycyl-phosphatidylserine + H2O = [protein]-C-terminal L-amino acid-glycine + a 1,2-diacyl-sn-glycero-3-phospho-L-serine. Its function is as follows. Cysteine protease that plays a key role in autophagy by mediating both proteolytic activation and delipidation of ATG8 family proteins. Required for canonical autophagy (macroautophagy), non-canonical autophagy as well as for mitophagy. The protease activity is required for proteolytic activation of ATG8 family proteins: cleaves the C-terminal amino acid of ATG8 proteins to reveal a C-terminal glycine. Exposure of the glycine at the C-terminus is essential for ATG8 proteins conjugation to phosphatidylethanolamine (PE) and insertion to membranes, which is necessary for autophagy. Protease activity is also required to counteract formation of high-molecular weight conjugates of ATG8 proteins (ATG8ylation): acts as a deubiquitinating-like enzyme that removes ATG8 conjugated to other proteins, such as ATG3. In addition to the protease activity, also mediates delipidation of ATG8 family proteins. Catalyzes delipidation of PE-conjugated forms of ATG8 proteins during macroautophagy. Also involved in non-canonical autophagy, a parallel pathway involving conjugation of ATG8 proteins to single membranes at endolysosomal compartments, by catalyzing delipidation of ATG8 proteins conjugated to phosphatidylserine (PS). This is Cysteine protease ATG4B from Gallus gallus (Chicken).